The following is a 271-amino-acid chain: Phosphatidylglycerol--prolipoprotein diacylglyceryl transferase (271 aa).

7 helical membrane-spanning segments follow: residues 25–45 (WYGI…KFFV), 60–80 (YFIW…ILIY), 103–123 (FVGI…IATL), 134–154 (WIFL…GRIG), 181–201 (PSQL…VYLA), 209–229 (GELI…CEFY), and 235–255 (GIGF…IMFI). Residue R152 coordinates a 1,2-diacyl-sn-glycero-3-phospho-(1'-sn-glycerol).

Belongs to the Lgt family.

Its subcellular location is the cell inner membrane. It carries out the reaction L-cysteinyl-[prolipoprotein] + a 1,2-diacyl-sn-glycero-3-phospho-(1'-sn-glycerol) = an S-1,2-diacyl-sn-glyceryl-L-cysteinyl-[prolipoprotein] + sn-glycerol 1-phosphate + H(+). It functions in the pathway protein modification; lipoprotein biosynthesis (diacylglyceryl transfer). In terms of biological role, catalyzes the transfer of the diacylglyceryl group from phosphatidylglycerol to the sulfhydryl group of the N-terminal cysteine of a prolipoprotein, the first step in the formation of mature lipoproteins. The polypeptide is Phosphatidylglycerol--prolipoprotein diacylglyceryl transferase (Campylobacter jejuni subsp. jejuni serotype O:6 (strain 81116 / NCTC 11828)).